Reading from the N-terminus, the 450-residue chain is Putative zinc metalloprotease TP_0600 (450 aa).

His18 lines the Zn(2+) pocket. Residue Glu19 is part of the active site. Zn(2+) is bound at residue His22. Residues 102–124 (IAFAGPLANVLMAVMVLALVSAL) form a helical membrane-spanning segment. A PDZ domain is found at 200–278 (TITPDRDAHT…SVVLTVLRSG (79 aa)). The next 2 helical transmembrane spans lie at 384-406 (VCVSLFIMNLLPIPILDGGLILF) and 421-443 (VLYYLQFVGFAFVALIFLCAFWN).

This sequence belongs to the peptidase M50B family. Zn(2+) is required as a cofactor.

The protein localises to the cell inner membrane. The sequence is that of Putative zinc metalloprotease TP_0600 from Treponema pallidum (strain Nichols).